We begin with the raw amino-acid sequence, 385 residues long: MSSSTSSVESVEDESCSNECSASFTFDTNNNSRGDQQVDELAEETHMKLSITPTRESFSLSQLERIVTIGKGTFGRVELARDKISGAHYALKVLNIRRVVDMRQTQHVHNEKRVLLQLKHPFIVKMYASEKDSNNLYMIMEFVPGGEMFSYLRASRSFSNSMARFYASEIVCALEYIHSLGIVYRDLKPENLMLSKEGHIKMADFGFAKELRDRTYTICGTPDYLAPESLARTGHNKGVDWWALGILIYEMMVGKPPFRGKTTAEIYDSIIEHKLKFPRSFNLAAKDLVKKLLEVDRTQRIGCMKNGTQDVKDHKWFEKVNWDDTLHLRVEVKKLIGIFLIPIFQPPIVPTLYHPGDTGNFDDYEEDTTGGPLCSQRERDLFAEW.

Residues 63 to 317 enclose the Protein kinase domain; sequence LERIVTIGKG…TQDVKDHKWF (255 aa). Residues 69–77 and K92 each bind ATP; that span reads IGKGTFGRV. D186 acts as the Proton acceptor in catalysis. One can recognise an AGC-kinase C-terminal domain in the interval 318-385; that stretch reads EKVNWDDTLH…QRERDLFAEW (68 aa).

It belongs to the protein kinase superfamily. Ser/Thr protein kinase family. cAMP subfamily.

It carries out the reaction L-seryl-[protein] + ATP = O-phospho-L-seryl-[protein] + ADP + H(+). The catalysed reaction is L-threonyl-[protein] + ATP = O-phospho-L-threonyl-[protein] + ADP + H(+). This chain is cAMP-dependent protein kinase, catalytic subunit-like, found in Caenorhabditis briggsae.